The following is a 471-amino-acid chain: Uronate isomerase (471 aa).

It belongs to the metallo-dependent hydrolases superfamily. Uronate isomerase family.

The enzyme catalyses D-glucuronate = D-fructuronate. The catalysed reaction is aldehydo-D-galacturonate = keto-D-tagaturonate. The protein operates within carbohydrate metabolism; pentose and glucuronate interconversion. The chain is Uronate isomerase from Xanthomonas campestris pv. campestris (strain B100).